A 297-amino-acid chain; its full sequence is Transmembrane protein 169 (297 aa).

The tract at residues 1-85 (MEEPTAVEGQ…KEEEGDDFLD (85 aa)) is disordered. Residues 1-159 (MEEPTAVEGQ…CQMGADRGPH (159 aa)) lie on the Extracellular side of the membrane. Residues 61–85 (KTDEEPGESEGGDQPKEEEGDDFLD) show a composition bias toward acidic residues. The chain crosses the membrane as a helical span at residues 160–180 (VVLWTLICLPVVFILSFVVSF). Residues 181–210 (YYGTITWYNIFLVYNEERTFWHKISYCPCL) are Cytoplasmic-facing. The helical transmembrane segment at 211-231 (VLFYPVLIMAMASSLGLYAAV) threads the bilayer. At 232–297 (VQLSWSWEAW…PIQEVETSTV (66 aa)) the chain is on the extracellular side.

It localises to the membrane. This is Transmembrane protein 169 (TMEM169) from Homo sapiens (Human).